The following is a 345-amino-acid chain: Short-wave-sensitive opsin 1 (345 aa).

Topologically, residues 1 to 30 (MSEEEFYLFKNISSVGPWDGPQYHIAPVWA) are extracellular. N-linked (GlcNAc...) asparagine glycosylation is present at Asn-11. The helical transmembrane segment at 31–55 (FYLQAAFMGTVFLIGFPLNAMVLVA) threads the bilayer. Topologically, residues 56–67 (TLRYKKLRQPLN) are cytoplasmic. The chain crosses the membrane as a helical span at residues 68–93 (YILVNVSFGGFLLCIFSVFPVFVASC). Topologically, residues 94–107 (NGYFVFGRHVCALE) are extracellular. Cys-104 and Cys-181 form a disulfide bridge. The helical transmembrane segment at 108–127 (GFLGTVAGLVTGWSLAFLAF) threads the bilayer. Residues 128 to 146 (ERYIVICKPFGNFRFSSKH) lie on the Cytoplasmic side of the membrane. A helical transmembrane segment spans residues 147–170 (ALTVVLATWTIGIGVSIPPFFGWS). At 171–196 (RFIPEGLQCSCGPDWYTVGTKYRSES) the chain is on the extracellular side. The chain crosses the membrane as a helical span at residues 197 to 224 (YTWFLFIFCFIVPLSLICFSYTQLLRAL). Topologically, residues 225–246 (KAVAAQQQESATTQKAEREVSR) are cytoplasmic. The helical transmembrane segment at 247–270 (MVVVMVGSFCVCYVPYAAFAMYMV) threads the bilayer. The Extracellular segment spans residues 271-278 (NNRNHGLD). A helical transmembrane segment spans residues 279-303 (LRLVTIPSFFSKSACIYNPIIYCFM). An N6-(retinylidene)lysine modification is found at Lys-290. The Cytoplasmic portion of the chain corresponds to 304-345 (NKQFQACIMKMVCGKAMTDESDTCSSQKTEVSTVSSTQVGPN).

This sequence belongs to the G-protein coupled receptor 1 family. Opsin subfamily. Phosphorylated on some or all of the serine and threonine residues present in the C-terminal region. As to expression, the three color pigments are found in the cone photoreceptor cells. Expressed throughout the epidermis and dermis, primarily in the stratum granulosum in the facial and abdominal skin (at protein level). Expressed in dermal fibroblasts (at protein level). Expressed in melanocytes (at protein level).

The protein resides in the cell membrane. It is found in the photoreceptor inner segment. The protein localises to the cell projection. It localises to the cilium. Its subcellular location is the photoreceptor outer segment. The protein resides in the cytoplasm. It is found in the perinuclear region. Its function is as follows. Visual pigments are the light-absorbing molecules that mediate vision. They consist of an apoprotein, opsin, covalently linked to cis-retinal. Required for the maintenance of cone outer segment organization in the ventral retina, but not essential for the maintenance of functioning cone photoreceptors. Involved in ensuring correct abundance and localization of retinal membrane proteins. May increase spectral sensitivity in dim light. This chain is Short-wave-sensitive opsin 1 (OPN1SW), found in Homo sapiens (Human).